The sequence spans 1525 residues: Receptor-type guanylate cyclase Gyc76C (1525 aa).

An N-terminal signal peptide occupies residues 1–19 (MTRWPFNLLLLLSVAVRDC). Residues 20-493 (SNHRTVLTVG…KKDDTHYTST (474 aa)) lie on the Extracellular side of the membrane. Residues N74, N184, N222, N338, N383, N394, N416, N428, and N458 are each glycosylated (N-linked (GlcNAc...) asparagine). The helical transmembrane segment at 494-514 (VAAVVLGVLLFCSGVITMSIY) threads the bilayer. The Cytoplasmic portion of the chain corresponds to 515 to 1525 (RKWKIELEIE…AAARDRESIV (1011 aa)). The region spanning 547–824 (PSKVSLMSAQ…SVIRNRLKKM (278 aa)) is the Protein kinase domain. ATP is bound by residues 553–561 (MSAQSYGSR) and K581. One can recognise a Guanylate cyclase domain in the interval 896–1026 (TIYFSDIVGF…DTVNTASRME (131 aa)). Residues D901, I902, and D945 each contribute to the Mg(2+) site. Disordered stretches follow at residues 1122-1168 (GSRR…NGLG), 1192-1217 (ETNE…LVRQ), and 1256-1308 (ESRS…VHSS). The segment covering 1147–1162 (ESPRMVSKRDRDRERP) has biased composition (basic and acidic residues). Gly residues predominate over residues 1202–1212 (GGSGGVSGSGS). Over residues 1282–1308 (LSKNNSRSLDTGVSLISGNPNGEVHSS) the composition is skewed to polar residues.

The protein belongs to the adenylyl cyclase class-4/guanylyl cyclase family. As to quaternary structure, interacts with the semaphorin 1A receptor PlexA; PlexA enhances Gyc76C catalytic activity. Interacts with the PDZ domain-containing protein kermit; kermit increases cell surface expression of Gyc76C. In the adult, widely distributed in the head and thorax with highest levels in the optic lobe and central brain and expression also detected in the retina. Expressed at similar levels in adult head and body. In females, highly expressed in oocytes with lower levels in the digestive tract. In mid-embryogenesis, enriched in the circular visceral mesoderm that overlies the migrating salivary gland and in the fat body that underlies the gland but at background levels in the gland itself. In late embryogenesis, detected in the mature salivary gland, in the somatic body wall muscles and the tendon cells to which the muscles attach, and in the constricting midgut. Also expressed in migrating tracheal cells at mid-embryogenesis and in the developed trachea at the end of embryogenesis with enrichment in the apical domains.

It localises to the cell membrane. It carries out the reaction GTP = 3',5'-cyclic GMP + diphosphate. In terms of biological role, guanylate cyclase involved in the production of the second messenger cGMP. Acts as a receptor for the NPLP1-4 peptide and modulates the innate immune IMD pathway in response to salt stress by inducing nuclear translocation of NF-kappa-B protein Rel which leads to increased expression of the antimicrobial peptide diptericin. Plays a role in Sema-1a-mediated axon repulsion which is required for the correct establishment of neuromuscular connectivity. Required in developing embryonic somatic muscle for correct patterning of ventral and lateral muscles and for localization of integrin beta-ps at developing dorsal muscle myotendinous junctions. Required for invagination, migration and lumen shape of the embryonic salivary gland by regulating the localization of the integrin-binding protein rhea/Talin to the visceral mesoderm surrounding the gland and maintaining the laminin matrix. Required in the developing wing to regulate extracellular matrix (ECM) organization by activating the cGMP-dependent protein kinase For which represses the activity of matrix metalloproteases such as Mmp2 and decreases ECM matrix reorganization. The polypeptide is Receptor-type guanylate cyclase Gyc76C (Drosophila melanogaster (Fruit fly)).